The primary structure comprises 168 residues: ATP synthase subunit b (168 aa).

A helical transmembrane segment spans residues Asn11–Leu31.

This sequence belongs to the ATPase B chain family. F-type ATPases have 2 components, F(1) - the catalytic core - and F(0) - the membrane proton channel. F(1) has five subunits: alpha(3), beta(3), gamma(1), delta(1), epsilon(1). F(0) has three main subunits: a(1), b(2) and c(10-14). The alpha and beta chains form an alternating ring which encloses part of the gamma chain. F(1) is attached to F(0) by a central stalk formed by the gamma and epsilon chains, while a peripheral stalk is formed by the delta and b chains.

It localises to the cell membrane. In terms of biological role, f(1)F(0) ATP synthase produces ATP from ADP in the presence of a proton or sodium gradient. F-type ATPases consist of two structural domains, F(1) containing the extramembraneous catalytic core and F(0) containing the membrane proton channel, linked together by a central stalk and a peripheral stalk. During catalysis, ATP synthesis in the catalytic domain of F(1) is coupled via a rotary mechanism of the central stalk subunits to proton translocation. Functionally, component of the F(0) channel, it forms part of the peripheral stalk, linking F(1) to F(0). This is ATP synthase subunit b from Lactococcus lactis subsp. lactis (strain IL1403) (Streptococcus lactis).